Consider the following 20-residue polypeptide: Unknown protein NF009 from 2D-PAGE (20 aa).

Residues 1–20 (ATSAAQGAALDESVRKVLKP) are disordered.

The chain is Unknown protein NF009 from 2D-PAGE from Naegleria fowleri (Brain eating amoeba).